Reading from the N-terminus, the 449-residue chain is Protein CapK (449 aa).

The protein operates within capsule biogenesis; capsule polysaccharide biosynthesis. Required for the biosynthesis of type 1 capsular polysaccharide. The protein is Protein CapK (capK) of Staphylococcus aureus.